The following is a 624-amino-acid chain: 1-deoxy-D-xylulose-5-phosphate synthase (624 aa).

Thiamine diphosphate contacts are provided by residues H74 and 115 to 117; that span reads GHS. D146 is a Mg(2+) binding site. Residues 147–148, N175, Y286, and E367 contribute to the thiamine diphosphate site; that span reads GA. N175 is a binding site for Mg(2+).

Belongs to the transketolase family. DXPS subfamily. Homodimer. The cofactor is Mg(2+). It depends on thiamine diphosphate as a cofactor.

It catalyses the reaction D-glyceraldehyde 3-phosphate + pyruvate + H(+) = 1-deoxy-D-xylulose 5-phosphate + CO2. The protein operates within metabolic intermediate biosynthesis; 1-deoxy-D-xylulose 5-phosphate biosynthesis; 1-deoxy-D-xylulose 5-phosphate from D-glyceraldehyde 3-phosphate and pyruvate: step 1/1. Functionally, catalyzes the acyloin condensation reaction between C atoms 2 and 3 of pyruvate and glyceraldehyde 3-phosphate to yield 1-deoxy-D-xylulose-5-phosphate (DXP). The chain is 1-deoxy-D-xylulose-5-phosphate synthase from Alkaliphilus oremlandii (strain OhILAs) (Clostridium oremlandii (strain OhILAs)).